Here is a 257-residue protein sequence, read N- to C-terminus: Pimeloyl-[acyl-carrier protein] methyl ester esterase (257 aa).

The 227-residue stretch at 15–241 folds into the AB hydrolase-1 domain; it reads HLVLLHGWGL…KAAHAPFVSH (227 aa). Substrate is bound by residues Trp22, 82–83, and 143–147; these read SL and FLALQ. Ser82 acts as the Nucleophile in catalysis. Active-site residues include Asp207 and His235. A substrate-binding site is contributed by His235.

Belongs to the AB hydrolase superfamily. Carboxylesterase BioH family. In terms of assembly, monomer.

The protein localises to the cytoplasm. It catalyses the reaction 6-carboxyhexanoyl-[ACP] methyl ester + H2O = 6-carboxyhexanoyl-[ACP] + methanol + H(+). It functions in the pathway cofactor biosynthesis; biotin biosynthesis. Functionally, the physiological role of BioH is to remove the methyl group introduced by BioC when the pimeloyl moiety is complete. It allows to synthesize pimeloyl-ACP via the fatty acid synthetic pathway through the hydrolysis of the ester bonds of pimeloyl-ACP esters. This chain is Pimeloyl-[acyl-carrier protein] methyl ester esterase, found in Klebsiella pneumoniae (strain 342).